The following is a 66-amino-acid chain: Movement protein TGBp3 (66 aa).

Residues 1–2 (MD) are Lumenal-facing. Residues 3–23 (FTTLIIIGVYLLVFIVYFAKI) traverse the membrane as a helical segment. The Cytoplasmic portion of the chain corresponds to 24 to 66 (NTSVCTISISGASIEISGCDNPTLFEILPKLRPFNHGLSLPSN).

Belongs to the Tymovirales TGBp3 protein family.

The protein resides in the host endoplasmic reticulum membrane. Functionally, plays a role in viral cell-to-cell propagation, by facilitating genome transport to neighboring plant cells through plasmosdesmata. May induce the formation of granular vesicles derived from the Endoplasmic reticulum, which align on actin filaments. This chain is Movement protein TGBp3, found in Trifolium (WCMV).